The chain runs to 551 residues: Glucose-6-phosphate isomerase (551 aa).

The active-site Proton donor is Glu356. Active-site residues include His387 and Lys515.

This sequence belongs to the GPI family.

The protein resides in the cytoplasm. The enzyme catalyses alpha-D-glucose 6-phosphate = beta-D-fructose 6-phosphate. The protein operates within carbohydrate biosynthesis; gluconeogenesis. It functions in the pathway carbohydrate degradation; glycolysis; D-glyceraldehyde 3-phosphate and glycerone phosphate from D-glucose: step 2/4. Its function is as follows. Catalyzes the reversible isomerization of glucose-6-phosphate to fructose-6-phosphate. The protein is Glucose-6-phosphate isomerase of Blochmanniella pennsylvanica (strain BPEN).